The chain runs to 106 residues: Oncosphere antigen B (106 aa).

The 96-residue stretch at 11–106 (LPQHFRWSQV…QSELRSMCIK (96 aa)) folds into the Fibronectin type-III domain.

The sequence is that of Oncosphere antigen B (ONCB) from Hydatigena taeniaeformis (Feline tapeworm).